Consider the following 70-residue polypeptide: Putative ankyrin repeat protein RC0502 (70 aa).

The ANK repeat unit spans residues 9 to 43; that stretch reads KGRIPIHYATYSKQHEITQILILLQPGSEIDTVDN.

This chain is Putative ankyrin repeat protein RC0502, found in Rickettsia conorii (strain ATCC VR-613 / Malish 7).